Here is a 651-residue protein sequence, read N- to C-terminus: Probable Xaa-Pro aminopeptidase P (651 aa).

Mn(2+) is bound by residues aspartate 448, aspartate 459, glutamate 557, and glutamate 571.

Belongs to the peptidase M24B family. Requires Mn(2+) as cofactor.

It catalyses the reaction Release of any N-terminal amino acid, including proline, that is linked to proline, even from a dipeptide or tripeptide.. In terms of biological role, catalyzes the removal of a penultimate prolyl residue from the N-termini of peptides. This chain is Probable Xaa-Pro aminopeptidase P (AMPP), found in Coccidioides posadasii (strain C735) (Valley fever fungus).